A 141-amino-acid chain; its full sequence is Putative nickel-responsive regulator (141 aa).

The Ni(2+) site is built by H80, H91, H93, and C99.

It belongs to the transcriptional regulatory CopG/NikR family. The cofactor is Ni(2+).

In terms of biological role, transcriptional regulator. This chain is Putative nickel-responsive regulator, found in Methanococcus vannielii (strain ATCC 35089 / DSM 1224 / JCM 13029 / OCM 148 / SB).